The following is a 296-amino-acid chain: uncharacterized protein (296 aa).

A signal peptide spans 1–20 (MKKLLLIIITVFFAFNVAQA).

This is an uncharacterized protein from Rickettsia felis (strain ATCC VR-1525 / URRWXCal2) (Rickettsia azadi).